A 139-amino-acid chain; its full sequence is Large ribosomal subunit protein uL16 (139 aa).

It belongs to the universal ribosomal protein uL16 family. As to quaternary structure, part of the 50S ribosomal subunit.

Its function is as follows. Binds 23S rRNA and is also seen to make contacts with the A and possibly P site tRNAs. The sequence is that of Large ribosomal subunit protein uL16 from Chlorobium luteolum (strain DSM 273 / BCRC 81028 / 2530) (Pelodictyon luteolum).